A 687-amino-acid chain; its full sequence is Chloride channel protein ClC-Ka (687 aa).

Transmembrane regions (helical) follow at residues 52 to 72 (FLMT…FALG), 161 to 181 (LFLG…AYLG), 202 to 222 (VAGA…GVLF), and 236 to 256 (YWRG…LAVF). Ca(2+) contacts are provided by Glu259, Glu261, Asp278, and Glu281. 6 helical membrane-spanning segments follow: residues 282–302 (IFFF…YLYC), 325–345 (PLYA…PGVG), 396–416 (FTIF…LILA), 417–437 (TTIP…AAIG), 452–472 (IVAG…AGAA), and 486–506 (LLAF…MAVL). Residues 507 to 687 (AANAIAQSCQ…SALTNPPPAK (181 aa)) are Cytoplasmic-facing. 2 CBS domains span residues 551 to 612 (MRRA…ARAS) and 628 to 686 (TEPV…PPPA).

The protein belongs to the chloride channel (TC 2.A.49) family. CLCNKA subfamily. As to quaternary structure, homodimer. Interacts with BSND. In terms of tissue distribution, expressed predominantly in the kidney.

The protein localises to the basolateral cell membrane. It carries out the reaction chloride(in) = chloride(out). It catalyses the reaction bromide(in) = bromide(out). The enzyme catalyses nitrate(in) = nitrate(out). The catalysed reaction is iodide(out) = iodide(in). Its function is as follows. Anion-selective channel permeable to small monovalent anions with ion selectivity for chloride &gt; bromide &gt; nitrate &gt; iodide. Forms a homodimeric channel where each subunit has its own ion conduction pathway. May conduct double-barreled currents controlled by two types of gates, two fast gates that control each subunit independently and a slow common gate that opens and shuts off both subunits simultaneously. Assembles with the regulatory subunit BSND/Barttin for sorting at the basolateral plasma membrane domain and functional switch to the ion conducting state. CLCNKA:BSND channels display mostly a linear current-voltage relationship with fast gating at negative potentials. Mediates transepithelial chloride transport from the lumen to interstitial compartment along the thin ascending limb of Henle's loop, contributing to generation of hypertonic medullary interstitium as a countercurrent system to achieve urine concentration. Conducts chloride currents in the stria vascularis of the inner ear to establish the endocochlear potential necessary for normal hearing. In Oryctolagus cuniculus (Rabbit), this protein is Chloride channel protein ClC-Ka (CLCNKA).